Reading from the N-terminus, the 216-residue chain is Small ribosomal subunit protein eS6 (216 aa).

The protein belongs to the eukaryotic ribosomal protein eS6 family.

The polypeptide is Small ribosomal subunit protein eS6 (Staphylothermus marinus (strain ATCC 43588 / DSM 3639 / JCM 9404 / F1)).